The chain runs to 308 residues: HPr kinase/phosphorylase (308 aa).

Catalysis depends on residues histidine 138 and lysine 159. Residue 153–160 (GESGLGKS) participates in ATP binding. Serine 160 serves as a coordination point for Mg(2+). Aspartate 177 acts as the Proton acceptor; for phosphorylation activity. Proton donor; for dephosphorylation activity in catalysis. The important for the catalytic mechanism of both phosphorylation and dephosphorylation stretch occupies residues 201-210 (LEVRGLGLLD). Glutamate 202 is a binding site for Mg(2+). The active site involves arginine 243. The segment at 264–269 (QVAAGR) is important for the catalytic mechanism of dephosphorylation.

This sequence belongs to the HPrK/P family. In terms of assembly, homohexamer. Mg(2+) serves as cofactor.

The catalysed reaction is [HPr protein]-L-serine + ATP = [HPr protein]-O-phospho-L-serine + ADP + H(+). The enzyme catalyses [HPr protein]-O-phospho-L-serine + phosphate + H(+) = [HPr protein]-L-serine + diphosphate. Catalyzes the ATP- as well as the pyrophosphate-dependent phosphorylation of a specific serine residue in HPr, a phosphocarrier protein of the phosphoenolpyruvate-dependent sugar phosphotransferase system (PTS). HprK/P also catalyzes the pyrophosphate-producing, inorganic phosphate-dependent dephosphorylation (phosphorolysis) of seryl-phosphorylated HPr (P-Ser-HPr). The sequence is that of HPr kinase/phosphorylase from Bordetella petrii (strain ATCC BAA-461 / DSM 12804 / CCUG 43448).